A 393-amino-acid chain; its full sequence is Riboflavin biosynthesis protein RibBA (393 aa).

Residues Met-1 to Lys-200 form a DHBP synthase region. D-ribulose 5-phosphate is bound by residues Arg-27 to Glu-28, Asp-32, Arg-139 to Thr-143, and Glu-163. Glu-28 contacts Mg(2+). His-142 serves as a coordination point for Mg(2+). Positions Leu-201–Ile-393 are GTP cyclohydrolase II. Arg-249–Ala-253 is a binding site for GTP. Cys-254, Cys-265, and Cys-267 together coordinate Zn(2+). Residues Gln-270, Glu-291–Arg-293, and Thr-313 contribute to the GTP site. Asp-325 serves as the catalytic Proton acceptor; for GTP cyclohydrolase activity. Arg-327 functions as the Nucleophile; for GTP cyclohydrolase activity in the catalytic mechanism. GTP contacts are provided by Ser-348 and Lys-353.

It in the N-terminal section; belongs to the DHBP synthase family. This sequence in the C-terminal section; belongs to the GTP cyclohydrolase II family. The cofactor is Mg(2+). Requires Mn(2+) as cofactor. Zn(2+) serves as cofactor.

It carries out the reaction D-ribulose 5-phosphate = (2S)-2-hydroxy-3-oxobutyl phosphate + formate + H(+). It catalyses the reaction GTP + 4 H2O = 2,5-diamino-6-hydroxy-4-(5-phosphoribosylamino)-pyrimidine + formate + 2 phosphate + 3 H(+). The protein operates within cofactor biosynthesis; riboflavin biosynthesis; 2-hydroxy-3-oxobutyl phosphate from D-ribulose 5-phosphate: step 1/1. It participates in cofactor biosynthesis; riboflavin biosynthesis; 5-amino-6-(D-ribitylamino)uracil from GTP: step 1/4. Its function is as follows. Catalyzes the conversion of D-ribulose 5-phosphate to formate and 3,4-dihydroxy-2-butanone 4-phosphate. Functionally, catalyzes the conversion of GTP to 2,5-diamino-6-ribosylamino-4(3H)-pyrimidinone 5'-phosphate (DARP), formate and pyrophosphate. This chain is Riboflavin biosynthesis protein RibBA, found in Staphylococcus aureus (strain COL).